A 184-amino-acid chain; its full sequence is F(420)H(2) dehydrogenase subunit B (184 aa).

Residues 1-20 are disordered; that stretch reads MGEVKETKTNNSKENPEEEV. Residues C61, C62, C126, and C156 each coordinate [4Fe-4S] cluster.

The protein belongs to the complex I 20 kDa subunit family. The FPO complex is composed of at least 13 different subunits. Requires FAD as cofactor. It depends on [4Fe-4S] cluster as a cofactor.

The protein localises to the cell inner membrane. It carries out the reaction methanophenazine + reduced coenzyme F420-(gamma-L-Glu)(n) = dihydromethanophenazine + oxidized coenzyme F420-(gamma-L-Glu)(n) + H(+). Its function is as follows. Component of the F(420)H(2) dehydrogenase (FPO complex) which is part of the energy-conserving F(420)H(2):heterodisulfide oxidoreductase system. The membrane-bound electron transfer system of the complex plays an important role in the metabolism of methylotrophic methanogens when the organisms grow on methanol or methylamines. Catalyzes the oxidation of methanophenazine to dihydromethanophenazine. It shuttles electrons from F(420)H(2), via FAD and iron-sulfur (Fe-S) centers, to methanophenazine (an electron carrier in the membrane). It couples the redox reaction to proton translocation (for every two electrons transferred, two hydrogen ions are translocated across the cytoplasmic membrane), and thus conserves the redox energy in a proton gradient. It also catalyzes the oxidation of F(420)H(2) with quinones such as 2,3-dimethyl-1,4-naphthoquinone, 2-methyl-1,4-naphthoquinone and tetramethyl-p-benzoquinone. The polypeptide is F(420)H(2) dehydrogenase subunit B (fpoB) (Methanosarcina mazei (strain ATCC BAA-159 / DSM 3647 / Goe1 / Go1 / JCM 11833 / OCM 88) (Methanosarcina frisia)).